Consider the following 256-residue polypeptide: MTDVARILKEARDQGRMTALDYASLIFDEFMELHGDRQFADDGSIVGGIAYLADQPVTVIGIQKGKNLQDNLARNFGQPHPEGYRKALRLMKQAEKFGRPVITFINTAGAYPGVGAEERGQGEAIARNLMEMSDLKVPIIAIIIGEGGSGGALALAVADQVWMLENTMYAVLSPEGFASILWKDGSRATEAAELMKITAAELYQMGVIDRIIPERGYFSSEIVEMIKSHLIDEITQLQAKPLEELLDQRYQRFRKY.

The CoA carboxyltransferase C-terminal domain occupies 1 to 236 (MTDVARILKE…KSHLIDEITQ (236 aa)).

It belongs to the AccA family. In terms of assembly, acetyl-CoA carboxylase is a heterohexamer composed of biotin carboxyl carrier protein (AccB), biotin carboxylase (AccC) and two subunits each of ACCase subunit alpha (AccA) and ACCase subunit beta (AccD).

The protein resides in the cytoplasm. It catalyses the reaction N(6)-carboxybiotinyl-L-lysyl-[protein] + acetyl-CoA = N(6)-biotinyl-L-lysyl-[protein] + malonyl-CoA. The protein operates within lipid metabolism; malonyl-CoA biosynthesis; malonyl-CoA from acetyl-CoA: step 1/1. In terms of biological role, component of the acetyl coenzyme A carboxylase (ACC) complex. First, biotin carboxylase catalyzes the carboxylation of biotin on its carrier protein (BCCP) and then the CO(2) group is transferred by the carboxyltransferase to acetyl-CoA to form malonyl-CoA. The sequence is that of Acetyl-coenzyme A carboxylase carboxyl transferase subunit alpha from Streptococcus equi subsp. equi (strain 4047).